The sequence spans 43 residues: Protein PsbN (43 aa).

The helical transmembrane segment at 5-27 (TFLSIFISAALLGITGYSIYTAF) threads the bilayer.

It belongs to the PsbN family.

It localises to the plastid. The protein localises to the cyanelle thylakoid membrane. May play a role in photosystem I and II biogenesis. In Cyanophora paradoxa, this protein is Protein PsbN.